The primary structure comprises 71 residues: Brevinin-1SN2 (71 aa).

Positions 1 to 22 (MFTMKKSLLLIFFLGTINLSLC) are cleaved as a signal peptide. Residues 23 to 45 (EEERNADEDEKRDGDDESDVEVQ) constitute a propeptide, removed in mature form. Cysteines 65 and 71 form a disulfide.

The protein belongs to the frog skin active peptide (FSAP) family. Brevinin subfamily. In terms of tissue distribution, expressed by the skin glands.

The protein localises to the secreted. Its function is as follows. Antimicrobial peptide. Active against a variety of Gram-negative and Gram-positive bacterial strains. Active against fungus C.glabrata 090902 and C.albicans ATCC 10231. Shows hemolytic activity against human erythrocytes. The sequence is that of Brevinin-1SN2 from Sylvirana spinulosa (Fine-spined frog).